The chain runs to 184 residues: Dual specificity protein phosphatase 22 (184 aa).

Gly2 carries N-myristoyl glycine lipidation. In terms of domain architecture, Tyrosine-protein phosphatase spans 4 to 144 (GMSQILPGLY…LQEFEKHEVH (141 aa)). Cys88 (phosphocysteine intermediate) is an active-site residue. Residues Leu89, Ala90, Val92, Ser93, and Arg94 each coordinate a protein.

It belongs to the protein-tyrosine phosphatase family. Non-receptor class dual specificity subfamily. Monomer. Interacts with LCK; the interaction is direct. Interacts with UBR2; the interaction is direct. Post-translationally, myristoylation regulates subcellular location, and is necessary for activation of JNK.

It localises to the cytoplasm. The enzyme catalyses O-phospho-L-tyrosyl-[protein] + H2O = L-tyrosyl-[protein] + phosphate. It carries out the reaction O-phospho-L-seryl-[protein] + H2O = L-seryl-[protein] + phosphate. It catalyses the reaction O-phospho-L-threonyl-[protein] + H2O = L-threonyl-[protein] + phosphate. Dual specificity phosphatase; can dephosphorylate both phosphotyrosine and phosphoserine or phosphothreonine residues. Activates the JNK signaling pathway. Inhibits T-cell receptor signaling and T-cell mediated immune responses, acting, at least in part, by inducing degradation of E3 ubiquitin ligase UBR2. Dephosphorylates and thereby induces 'Lys-48'-linked ubiquitination of UBR2, leading to proteasomal degradation of UBR2. Dephosphorylates and thereby inactivates tyrosine kinase LCK. Inhibits UBR2-mediated 'Lys-63'-linked ubiquitination of LCK. May play a role in B-cell receptor (BCR) signaling and B-cell function. The sequence is that of Dual specificity protein phosphatase 22 (Dusp22) from Mus musculus (Mouse).